Consider the following 333-residue polypeptide: Ketol-acid reductoisomerase (NAD(P)(+)) (333 aa).

The region spanning 2–182 (AKIYYDEDAS…GATRAGVIET (181 aa)) is the KARI N-terminal Rossmann domain. Residues 25 to 28 (YGSQ), serine 51, and 83 to 86 (DTVQ) contribute to the NADP(+) site. Histidine 108 is a catalytic residue. Glycine 134 serves as a coordination point for NADP(+). Residues 183–327 (TFREETETDL…KELRQMMPWL (145 aa)) form the KARI C-terminal knotted domain. Positions 191, 195, 227, and 231 each coordinate Mg(2+). Position 252 (serine 252) interacts with substrate.

This sequence belongs to the ketol-acid reductoisomerase family. It depends on Mg(2+) as a cofactor.

The enzyme catalyses (2R)-2,3-dihydroxy-3-methylbutanoate + NAD(+) = (2S)-2-acetolactate + NADH + H(+). The catalysed reaction is (2R)-2,3-dihydroxy-3-methylbutanoate + NADP(+) = (2S)-2-acetolactate + NADPH + H(+). It participates in amino-acid biosynthesis; L-isoleucine biosynthesis; L-isoleucine from 2-oxobutanoate: step 2/4. It functions in the pathway amino-acid biosynthesis; L-valine biosynthesis; L-valine from pyruvate: step 2/4. In terms of biological role, involved in the biosynthesis of branched-chain amino acids (BCAA). Catalyzes an alkyl-migration followed by a ketol-acid reduction of (S)-2-acetolactate (S2AL) to yield (R)-2,3-dihydroxy-isovalerate. In the isomerase reaction, S2AL is rearranged via a Mg-dependent methyl migration to produce 3-hydroxy-3-methyl-2-ketobutyrate (HMKB). In the reductase reaction, this 2-ketoacid undergoes a metal-dependent reduction by NADPH or NADH to yield (R)-2,3-dihydroxy-isovalerate. This is Ketol-acid reductoisomerase (NAD(P)(+)) from Hydrogenobaculum sp. (strain Y04AAS1).